Here is a 366-residue protein sequence, read N- to C-terminus: Spermine synthase (366 aa).

At A2 the chain carries N-acetylalanine. S57 carries the post-translational modification Phosphoserine. Residues 122–362 enclose the PABS domain; that stretch reads RYWPTADGRL…ELWVFYTVWK (241 aa). Residue Q148 coordinates S-adenosyl 3-(methylsulfanyl)propylamine. Positions 177 and 201 each coordinate spermidine. S-adenosyl 3-(methylsulfanyl)propylamine contacts are provided by residues E220 and 255-256; that span reads DC. The active-site Proton acceptor is the D276. Spermidine contacts are provided by Y351 and E353.

This sequence belongs to the spermidine/spermine synthase family. Homodimer. Dimerization is mediated through the N-terminal domain and seems to be required for activity as deletion of the N-terminal domain causes complete loss of activity.

It carries out the reaction S-adenosyl 3-(methylsulfanyl)propylamine + spermidine = spermine + S-methyl-5'-thioadenosine + H(+). The protein operates within amine and polyamine biosynthesis; spermine biosynthesis; spermine from spermidine: step 1/1. Functionally, catalyzes the production of spermine from spermidine and decarboxylated S-adenosylmethionine (dcSAM). Required for normal viability, growth and fertility. The sequence is that of Spermine synthase (Sms) from Mus musculus (Mouse).